The following is a 703-amino-acid chain: UvrABC system protein B (703 aa).

The Helicase ATP-binding domain occupies 33-190 (TRIENGENDV…RRFVAMQYKR (158 aa)). Position 46-53 (46-53 (GATGTGKT)) interacts with ATP. Residues 99–122 (YYDYYQPEAYIPQTDTYIEKDSNI) carry the Beta-hairpin motif. The region spanning 436 to 589 (QIDDLLAEIK…QIAYNQEHGI (154 aa)) is the Helicase C-terminal domain. One can recognise a UVR domain in the interval 659–694 (ADLIRQLSEQMHTAAEQLQFELAARLRDEIRDLKKE).

Belongs to the UvrB family. Forms a heterotetramer with UvrA during the search for lesions. Interacts with UvrC in an incision complex.

It is found in the cytoplasm. In terms of biological role, the UvrABC repair system catalyzes the recognition and processing of DNA lesions. A damage recognition complex composed of 2 UvrA and 2 UvrB subunits scans DNA for abnormalities. Upon binding of the UvrA(2)B(2) complex to a putative damaged site, the DNA wraps around one UvrB monomer. DNA wrap is dependent on ATP binding by UvrB and probably causes local melting of the DNA helix, facilitating insertion of UvrB beta-hairpin between the DNA strands. Then UvrB probes one DNA strand for the presence of a lesion. If a lesion is found the UvrA subunits dissociate and the UvrB-DNA preincision complex is formed. This complex is subsequently bound by UvrC and the second UvrB is released. If no lesion is found, the DNA wraps around the other UvrB subunit that will check the other stand for damage. This chain is UvrABC system protein B, found in Bifidobacterium longum subsp. infantis (strain ATCC 15697 / DSM 20088 / JCM 1222 / NCTC 11817 / S12).